We begin with the raw amino-acid sequence, 709 residues long: Nucleobase-ascorbate transporter 11 (709 aa).

Disordered regions lie at residues 1 to 28 (MDSG…YGER) and 58 to 167 (TGFV…SEDG). Gly residues predominate over residues 15 to 25 (KGNGSGGGNGY). Over residues 65-74 (SGETSTSTRT) the composition is skewed to polar residues. Composition is skewed to basic and acidic residues over residues 75 to 89 (KFGE…KGRD), 108 to 132 (NRPE…RLNR), and 142 to 151 (EGGKINKDLE). 12 helical membrane passes run 196–216 (YLSL…AMDG), 222–242 (ASVI…HCYF), 246–266 (LPLV…VINS), 288–308 (IIVG…SLLL), 310–330 (FINP…FFSY), 336–356 (GTCV…TLYL), 369–389 (IYAV…LTVG), 454–474 (IIMI…YHSA), 532–552 (LVIG…GAIL), 555–575 (IPQA…VSLG), 590–610 (ITIV…FQQY), and 642–662 (FAMN…AFIL).

Belongs to the nucleobase:cation symporter-2 (NCS2) (TC 2.A.40) family. As to expression, expressed in leaf primordia and vasculature of pedicels, rosette leaves, sepals, carpels and siliques. Expressed in the root central cylinder.

It is found in the membrane. The protein is Nucleobase-ascorbate transporter 11 (NAT11) of Arabidopsis thaliana (Mouse-ear cress).